We begin with the raw amino-acid sequence, 503 residues long: Cytochrome P450 monooxygenase lnbC (503 aa).

A helical transmembrane segment spans residues Val14 to Val34. 2 N-linked (GlcNAc...) asparagine glycosylation sites follow: Asn94 and Asn169. Cys446 is a binding site for heme.

The protein belongs to the cytochrome P450 family. The cofactor is heme.

The protein resides in the membrane. It participates in secondary metabolite biosynthesis. Functionally, cytochrome P450 monooxygenase; part of the lnb gene cluster that mediates the biosynthesis of diastereomeric piperazines. Lna and lnb clusters encode sets of enzymes that produce overlapping sets of previously undescribed metabolites such as piperazinomycin-like metabolites or morpholine. The lna and lnb biosynthetic pathways appear to be part of a signaling network that controls the formation of sclerotia, a resilient overwintering structure. One primary function of the non-canonical nonribosomal peptide synthetases lnaA and lnbA consists in the reduction of L-tyrosine. The presence in the clusters of tailoring enzymes such as the oxidoreductases lnaB, lnbB, lnaE or lnbE, as well as of the cytochrome P450 monooxygenases lnaC, lnaD, or lnbC, might explain formation of various diastereomeric piperazines. In Aspergillus flavus (strain ATCC 200026 / FGSC A1120 / IAM 13836 / NRRL 3357 / JCM 12722 / SRRC 167), this protein is Cytochrome P450 monooxygenase lnbC.